Here is a 258-residue protein sequence, read N- to C-terminus: Putative cysteine-rich repeat secretory protein 61 (258 aa).

An N-terminal signal peptide occupies residues 1–31 (MSSSFIPKRIALVLNLAMVAIQVFFIRSVSS). Gnk2-homologous domains follow at residues 38–140 (YLYH…PTAF) and 146–253 (DKNK…IYPF).

It belongs to the cysteine-rich repeat secretory protein family.

It is found in the secreted. The protein is Putative cysteine-rich repeat secretory protein 61 (CRRSP61) of Arabidopsis thaliana (Mouse-ear cress).